The chain runs to 341 residues: Serine/threonine-protein kinase-like protein At5g23170 (341 aa).

The Protein kinase domain occupies 16–298 (FSPSKLIGKG…FGEITAEIVA (283 aa)). Residues 22–30 (IGKGSHGYV) and Lys51 contribute to the ATP site. A disordered region spans residues 52 to 75 (TPSSLSPSSPSSSSSSKSEQTKKL). Residues 53–69 (PSSLSPSSPSSSSSSKS) are compositionally biased toward low complexity. Asp153 functions as the Proton acceptor in the catalytic mechanism. Residues 311 to 332 (MSVLRRVVKLKRRKKRLRETLT) adopt a coiled-coil conformation.

The protein belongs to the protein kinase superfamily. Ser/Thr protein kinase family. As to expression, ubiquitous. Higher expression in mature stamina and pollen.

The catalysed reaction is L-seryl-[protein] + ATP = O-phospho-L-seryl-[protein] + ADP + H(+). The enzyme catalyses L-threonyl-[protein] + ATP = O-phospho-L-threonyl-[protein] + ADP + H(+). This Arabidopsis thaliana (Mouse-ear cress) protein is Serine/threonine-protein kinase-like protein At5g23170.